Consider the following 234-residue polypeptide: Large ribosomal subunit protein uL1c (234 aa).

It belongs to the universal ribosomal protein uL1 family. Part of the 50S ribosomal subunit.

It localises to the plastid. The protein localises to the chloroplast. In terms of biological role, binds directly to 23S rRNA. Might be involved in E site tRNA release (Potential). The polypeptide is Large ribosomal subunit protein uL1c (rpl1) (Rhodomonas salina (Cryptomonas salina)).